Here is a 151-residue protein sequence, read N- to C-terminus: Cell division protein SepF (151 aa).

The protein belongs to the SepF family. Homodimer. Interacts with FtsZ.

It localises to the cytoplasm. Functionally, cell division protein that is part of the divisome complex and is recruited early to the Z-ring. Probably stimulates Z-ring formation, perhaps through the cross-linking of FtsZ protofilaments. Its function overlaps with FtsA. The chain is Cell division protein SepF from Desulfitobacterium hafniense (strain Y51).